A 413-amino-acid chain; its full sequence is Putative acid phosphatase 11 (413 aa).

Residue histidine 35 is the Nucleophile of the active site. Aspartate 315 (proton donor) is an active-site residue. Cysteine 381 and cysteine 387 are oxidised to a cystine.

The protein belongs to the histidine acid phosphatase family.

It catalyses the reaction a phosphate monoester + H2O = an alcohol + phosphate. The protein is Putative acid phosphatase 11 (pho-11) of Caenorhabditis elegans.